The chain runs to 1033 residues: DNA polymerase I A, chloroplastic (1033 aa).

A compositionally biased stretch (pro residues) spans 1–11 (MAVAPPLPPAP). Disordered stretches follow at residues 1–32 (MAVA…LSSP) and 104–142 (TNGT…PSNS). The N-terminal 55 residues, 1 to 55 (MAVAPPLPPAPARQLRRWKGSSPRPPPWLSSPFRRTRYLSRPAFAAGGRQDYSPS), are a transit peptide targeting the chloroplast. Over residues 115 to 124 (LRHDPSEDIR) the composition is skewed to basic and acidic residues. Polar residues predominate over residues 125-142 (SSNYPSLYNQRERGPSNS). The region spanning 321–482 (FGNGKTCIWV…LYESLKNKLE (162 aa)) is the 3'-5' exonuclease domain. Positions 696–1030 (CHAIAALCEV…VDAKYAKSWY (335 aa)) are polymerase.

It belongs to the DNA polymerase type-A family. In terms of tissue distribution, expressed in shoot apical meristem, root apical meristem, leaf primordia and the marginal meristem.

Its subcellular location is the plastid. The protein resides in the chloroplast. It carries out the reaction DNA(n) + a 2'-deoxyribonucleoside 5'-triphosphate = DNA(n+1) + diphosphate. Its activity is regulated as follows. Inhibited by dideoxythymidine-triphosphate (ddTTP), but not by aphidicolin and N-ethylmaleimide. In terms of biological role, in addition to polymerase activity, this DNA polymerase exhibits 5'-3' exonuclease activity. May be required for DNA replication and accumulation in plastids. This chain is DNA polymerase I A, chloroplastic, found in Oryza sativa subsp. japonica (Rice).